A 107-amino-acid chain; its full sequence is Integration host factor subunit beta (107 aa).

The segment covering 82–101 (PGKELRERVDRRAGEPLKAE) has biased composition (basic and acidic residues). The segment at 82-107 (PGKELRERVDRRAGEPLKAEDPDDDL) is disordered.

The protein belongs to the bacterial histone-like protein family. As to quaternary structure, heterodimer of an alpha and a beta chain.

In terms of biological role, this protein is one of the two subunits of integration host factor, a specific DNA-binding protein that functions in genetic recombination as well as in transcriptional and translational control. The protein is Integration host factor subunit beta of Paraburkholderia xenovorans (strain LB400).